A 751-amino-acid polypeptide reads, in one-letter code: Photosystem I P700 chlorophyll a apoprotein A1 (751 aa).

A run of 8 helical transmembrane segments spans residues 72–95 (IFSA…FHGA), 158–181 (LYCT…FHYH), 197–221 (MNHH…HVSM), 293–311 (TAHH…GHMY), 348–371 (WHAQ…QHMY), 387–413 (LSLF…IFMV), 435–457 (AIIS…LYIH), and 532–550 (FMVH…LILL). [4Fe-4S] cluster-binding residues include C574 and C583. 2 helical membrane-spanning segments follow: residues 590 to 611 (HVFL…HFSW) and 665 to 687 (LSAY…MFLF). H676 is a binding site for chlorophyll a'. Positions 684 and 692 each coordinate chlorophyll a. W693 contacts phylloquinone. The chain crosses the membrane as a helical span at residues 725–745 (AVGVAHYLLGGIVTTWAFFLA).

The protein belongs to the PsaA/PsaB family. The PsaA/B heterodimer binds the P700 chlorophyll special pair and subsequent electron acceptors. PSI consists of a core antenna complex that captures photons, and an electron transfer chain that converts photonic excitation into a charge separation. The cyanobacterial PSI reaction center is composed of one copy each of PsaA,B,C,D,E,F,I,J,K,L,M and X, and forms trimeric complexes. Requires PSI electron transfer chain: 5 chlorophyll a, 1 chlorophyll a', 2 phylloquinones and 3 4Fe-4S clusters. PSI core antenna: 90 chlorophyll a, 22 carotenoids, 3 phospholipids and 1 galactolipid. P700 is a chlorophyll a/chlorophyll a' dimer, A0 is one or more chlorophyll a, A1 is one or both phylloquinones and FX is a shared 4Fe-4S iron-sulfur center. as cofactor.

Its subcellular location is the cellular thylakoid membrane. It carries out the reaction reduced [plastocyanin] + hnu + oxidized [2Fe-2S]-[ferredoxin] = oxidized [plastocyanin] + reduced [2Fe-2S]-[ferredoxin]. Its function is as follows. PsaA and PsaB bind P700, the primary electron donor of photosystem I (PSI), as well as the electron acceptors A0, A1 and FX. PSI is a plastocyanin/cytochrome c6-ferredoxin oxidoreductase, converting photonic excitation into a charge separation, which transfers an electron from the donor P700 chlorophyll pair to the spectroscopically characterized acceptors A0, A1, FX, FA and FB in turn. Oxidized P700 is reduced on the lumenal side of the thylakoid membrane by plastocyanin or cytochrome c6. This is Photosystem I P700 chlorophyll a apoprotein A1 from Synechocystis sp. (strain ATCC 27184 / PCC 6803 / Kazusa).